Consider the following 461-residue polypeptide: Argininosuccinate lyase (461 aa).

Belongs to the lyase 1 family. Argininosuccinate lyase subfamily.

It is found in the cytoplasm. It carries out the reaction 2-(N(omega)-L-arginino)succinate = fumarate + L-arginine. It functions in the pathway amino-acid biosynthesis; L-arginine biosynthesis; L-arginine from L-ornithine and carbamoyl phosphate: step 3/3. In Dehalococcoides mccartyi (strain ATCC BAA-2100 / JCM 16839 / KCTC 5957 / BAV1), this protein is Argininosuccinate lyase.